A 122-amino-acid chain; its full sequence is Fluoride-specific ion channel FluC (122 aa).

4 helical membrane passes run 1–21 (MIGTILAVGFGGFLGAISRML), 34–54 (FPYGTLLVNIIGSFLMGLFFS), 60–80 (GVHIFTKSLISTGFLSAFTTF), and 100–120 (FLNIILNVILCLLAVWIGFLI).

The protein belongs to the fluoride channel Fluc/FEX (TC 1.A.43) family.

The protein resides in the cell inner membrane. It carries out the reaction fluoride(in) = fluoride(out). Fluoride-specific ion channel. Important for reducing fluoride concentration in the cell, thus reducing its toxicity. The protein is Fluoride-specific ion channel FluC of Campylobacter lari (strain RM2100 / D67 / ATCC BAA-1060).